Consider the following 455-residue polypeptide: uncharacterized protein (455 aa).

A run of 12 helical transmembrane segments spans residues 19 to 39, 63 to 83, 106 to 126, 140 to 160, 173 to 195, 200 to 222, 265 to 285, 288 to 308, 324 to 344, 348 to 368, 388 to 408, and 410 to 430; these read FSLFSLTWPIFIEVSLYMFMG, ILNLIIVMFSFIATGTTVIIS, FFISLAISAVVFFAAVPLLHM, FLQVVGGLSFIQALIMTFSAI, VTIGMNILNIAGNFVVIFGLFGF, VAGVAMSTSIARVIGLIAMIVIV, MIVTYFIAIMGAQALTTKVYT, ITMFILLFGTAISQGTQILIG, MKSLYWALGIAAATSVLMTIF, LIGLFTQSPDIIATASLLIAM, AAGDAKFPVYMAMISMWGIGL, and LAYLFGIHLGFGLAGIWISFI.

It belongs to the multi antimicrobial extrusion (MATE) (TC 2.A.66.1) family.

The protein localises to the cell membrane. This is an uncharacterized protein from Bacillus subtilis (strain 168).